The chain runs to 287 residues: Thymidylate synthase (287 aa).

Arginine 21 lines the dUMP pocket. Histidine 51 serves as a coordination point for (6R)-5,10-methylene-5,6,7,8-tetrahydrofolate. 150–151 is a binding site for dUMP; sequence RR. Cysteine 170 acts as the Nucleophile in catalysis. DUMP is bound by residues 190 to 193, asparagine 201, and 231 to 233; these read RSGD and HIY. Aspartate 193 contributes to the (6R)-5,10-methylene-5,6,7,8-tetrahydrofolate binding site. Alanine 286 contacts (6R)-5,10-methylene-5,6,7,8-tetrahydrofolate.

Belongs to the thymidylate synthase family. Bacterial-type ThyA subfamily. In terms of assembly, homodimer.

It localises to the cytoplasm. It catalyses the reaction dUMP + (6R)-5,10-methylene-5,6,7,8-tetrahydrofolate = 7,8-dihydrofolate + dTMP. It functions in the pathway pyrimidine metabolism; dTTP biosynthesis. Functionally, catalyzes the reductive methylation of 2'-deoxyuridine-5'-monophosphate (dUMP) to 2'-deoxythymidine-5'-monophosphate (dTMP) while utilizing 5,10-methylenetetrahydrofolate (mTHF) as the methyl donor and reductant in the reaction, yielding dihydrofolate (DHF) as a by-product. This enzymatic reaction provides an intracellular de novo source of dTMP, an essential precursor for DNA biosynthesis. The chain is Thymidylate synthase from Mycoplasma pneumoniae (strain ATCC 29342 / M129 / Subtype 1) (Mycoplasmoides pneumoniae).